The chain runs to 353 residues: Glucose import ATP-binding protein GlcV (353 aa).

The ABC transporter domain maps to 4–241 (IIVKNVSKVF…PVSIQVASLI (238 aa)). Residues 40-46 (SGAGKTT), Gln89, and Glu166 each bind ATP.

Belongs to the ABC transporter superfamily. In terms of assembly, the complex is composed of two ATP-binding proteins (GlcV), two transmembrane proteins (GlcT and GlcU) and a solute-binding protein (GlcS). Forms transient head-to-tail homodimers in the presence of ATP-Mg(2+).

It localises to the cell membrane. The catalysed reaction is D-glucose(out) + ATP + H2O = D-glucose(in) + ADP + phosphate + H(+). In terms of biological role, part of the ABC transporter complex GlcSTUV involved in glucose uptake. Responsible for energy coupling to the transport system. In vitro, as a free subunit, exhibits a constitutive ATPase activity. This chain is Glucose import ATP-binding protein GlcV, found in Saccharolobus solfataricus (strain ATCC 35092 / DSM 1617 / JCM 11322 / P2) (Sulfolobus solfataricus).